Reading from the N-terminus, the 93-residue chain is Cytochrome c oxidase polypeptide 6, mitochondrial (93 aa).

Residues 2 to 33 (STGNESYNLRYPKGFKGYPYNMYKLEGYGTPK) are Mitochondrial matrix-facing. Residues 34-53 (GYITLIGVVATLTVSGLFFA) form a helical membrane-spanning segment. The Mitochondrial intermembrane segment spans residues 54 to 93 (KTRSNKREYPTHNKEWRAKTLAYAKETNADPIYQLPKDKI).

Belongs to the cytochrome c oxidase IV family. As to quaternary structure, component of the cytochrome c oxidase (complex IV, CIV), a multisubunit enzyme composed of a catalytic core of 3 subunits and seevral supernumerary subunits. The complex exists as a monomer or a dimer and forms supercomplexes (SCs) in the inner mitochondrial membrane with ubiquinol-cytochrome c oxidoreductase (cytochrome b-c1 complex, complex III, CIII).

It is found in the mitochondrion inner membrane. It functions in the pathway energy metabolism; oxidative phosphorylation. Component of the cytochrome c oxidase, the last enzyme in the mitochondrial electron transport chain which drives oxidative phosphorylation. The respiratory chain contains 3 multisubunit complexes succinate dehydrogenase (complex II, CII), ubiquinol-cytochrome c oxidoreductase (cytochrome b-c1 complex, complex III, CIII) and cytochrome c oxidase (complex IV, CIV), that cooperate to transfer electrons derived from NADH and succinate to molecular oxygen, creating an electrochemical gradient over the inner membrane that drives transmembrane transport and the ATP synthase. Cytochrome c oxidase is the component of the respiratory chain that catalyzes the reduction of oxygen to water. Electrons originating from reduced cytochrome c in the intermembrane space (IMS) are transferred via the dinuclear copper A center (CU(A)) of subunit 2 and heme A of subunit 1 to the active site in subunit 1, a binuclear center (BNC) formed by heme A3 and copper B (CU(B)). The BNC reduces molecular oxygen to 2 water molecules using 4 electrons from cytochrome c in the IMS and 4 protons from the mitochondrial matrix. This chain is Cytochrome c oxidase polypeptide 6, mitochondrial (cxfA), found in Dictyostelium discoideum (Social amoeba).